Consider the following 240-residue polypeptide: MVRIQDLSLAFNGQTLFEHLNLTLLPNEWVSLLGSSGVGKSTLLRLLAGIETQGMVQGKILFEPKVRIAWLPQKETLYPWLSIVDNVQLQAVLFGRKSVKTTEKAKMLLEKVGMAAHWHKPCSQLSGGQKQRVALARTLMQEVDLILLDEPFSALDAISRHQLQDLAFELLEDKSVLLVTHDPQEALRLSQRIFVLRSPETHQTALSAVILPEGNAPRELHQANLWTLQQQLLQELGGEQ.

In terms of domain architecture, ABC transporter spans 2–223; that stretch reads VRIQDLSLAF…GNAPRELHQA (222 aa). Position 34–41 (34–41) interacts with ATP; the sequence is GSSGVGKS.

Belongs to the ABC transporter superfamily.

This is an uncharacterized protein from Haemophilus influenzae (strain ATCC 51907 / DSM 11121 / KW20 / Rd).